Here is a 240-residue protein sequence, read N- to C-terminus: Dihydromonapterin reductase (240 aa).

Tyrosine 152 functions as the Proton acceptor in the catalytic mechanism.

This sequence belongs to the short-chain dehydrogenases/reductases (SDR) family. FolM subfamily.

The catalysed reaction is (6S)-5,6,7,8-tetrahydrofolate + NADP(+) = 7,8-dihydrofolate + NADPH + H(+). The enzyme catalyses 7,8-dihydromonapterin + NADPH + H(+) = 5,6,7,8-tetrahydromonapterin + NADP(+). Catalyzes the reduction of dihydromonapterin to tetrahydromonapterin. Also has lower activity with dihydrofolate. This is Dihydromonapterin reductase (folM) from Shigella sonnei (strain Ss046).